Here is a 175-residue protein sequence, read N- to C-terminus: Bifunctional protein PyrR (175 aa).

The short motif at 97 to 109 (IVLIDDVLFTGRT) is the PRPP-binding element.

The protein belongs to the purine/pyrimidine phosphoribosyltransferase family. PyrR subfamily. Homodimer and homohexamer; in equilibrium.

The enzyme catalyses UMP + diphosphate = 5-phospho-alpha-D-ribose 1-diphosphate + uracil. In terms of biological role, regulates transcriptional attenuation of the pyrimidine nucleotide (pyr) operon by binding in a uridine-dependent manner to specific sites on pyr mRNA. This disrupts an antiterminator hairpin in the RNA and favors formation of a downstream transcription terminator, leading to a reduced expression of downstream genes. Also displays a weak uracil phosphoribosyltransferase activity which is not physiologically significant. The chain is Bifunctional protein PyrR from Leuconostoc citreum (strain KM20).